We begin with the raw amino-acid sequence, 493 residues long: Fizzy-related protein homolog (493 aa).

Disordered stretches follow at residues 31 to 51 (LTPANSPVSSPSKHGDRFIPS), 64 to 88 (INENEKSPSQNRKAKDATSDNGKDG), and 105 to 166 (EKVQ…SPRK). Threonine 32 is modified (phosphothreonine). Residues 32–42 (TPANSPVSSPS) show a composition bias toward polar residues. Serine 36 is modified (phosphoserine). Lysine 69 bears the N6-acetyllysine mark. 2 stretches are compositionally biased toward basic and acidic residues: residues 76–86 (KAKDATSDNGK) and 106–126 (KVQDPQTEDRRLQPSTPEHKG). Residues serine 133, serine 138, serine 146, and serine 151 each carry the phosphoserine modification. Polar residues predominate over residues 146–160 (SPYSLSPVSNKSQKL). Position 159 is an N6-acetyllysine (lysine 159). WD repeat units follow at residues 182-222 (PELQ…VTRL), 227-266 (VEGDSVTSVGWSERGNLVAVGTHKGFVQIWDAAAGKKLSM), 269-306 (GHTARVGALAWNADQLSSGSRDRMILQRDIRTPPLQSE), 311-350 (GHRQEVCGLKWSTDHQLLASGGNDNKLLVWNHSSLSPVQQ), 353-395 (EHLA…PLQC), 397-438 (DTGS…QVAK), and 441-480 (GHSYRVLYLAMSPDGEAIVTGAGDETLRFWNVFSKTRSTK).

The protein belongs to the WD repeat CDC20/Fizzy family. In terms of assembly, the unphosphorylated form interacts with APC/C during mitosis. Interacts with NINL. Interacts (in complex with the anaphase promoting complex APC) with MAD2L2; inhibits FZR1-mediated APC/C activation. Interacts with SIRT2. Interacts with USP37. Interacts (via WD repeats) with MAK. Interacts with RBBP8/CtIP; this interaction leads to RBBP8 proteasomal degradation. Interacts with HECW2. Interacts with SASS6; the interaction is regulated by CENATAC and leads to SASS6 proteasomal degradation. Interacts (via N-terminus) with CCNF. Interacts with CDC6. Interacts with TK1 (via the KEN box). In terms of processing, acetylated. Deacetylated by SIRT2 at Lys-69 and Lys-159; deacetylation enhances the interaction of FZR1 with CDC27, leading to activation of anaphase promoting complex/cyclosome (APC/C). Post-translationally, following DNA damage, it is dephosphorylated by CDC14B in G2 phase, leading to its reassociation with the APC/C, and allowing an efficient G2 DNA damage checkpoint. Phosphorylated by MAK.

It participates in protein modification; protein ubiquitination. In terms of biological role, substrate-specific adapter for the anaphase promoting complex/cyclosome (APC/C) E3 ubiquitin-protein ligase complex. Associates with the APC/C in late mitosis, in replacement of CDC20, and activates the APC/C during anaphase and telophase. The APC/C remains active in degrading substrates to ensure that positive regulators of the cell cycle do not accumulate prematurely. At the G1/S transition FZR1 is phosphorylated, leading to its dissociation from the APC/C. Following DNA damage, it is required for the G2 DNA damage checkpoint: its dephosphorylation and reassociation with the APC/C leads to the ubiquitination of PLK1, preventing entry into mitosis. Acts as an adapter for APC/C to target the DNA-end resection factor RBBP8/CtIP for ubiquitination and subsequent proteasomal degradation. Through the regulation of RBBP8/CtIP protein turnover, may play a role in DNA damage response, favoring DNA double-strand repair through error-prone non-homologous end joining (NHEJ) over error-free, RBBP8-mediated homologous recombination (HR). The chain is Fizzy-related protein homolog (Fzr1) from Mus musculus (Mouse).